Here is a 345-residue protein sequence, read N- to C-terminus: Cytoskeleton protein RodZ (345 aa).

Residues 1–111 are Cytoplasmic-facing; sequence MNTEASQDQT…LGKKHKKRDG (111 aa). The HTH cro/C1-type domain occupies 19–79; that stretch reads LRQARESLGL…KLVHLPEDEL (61 aa). The H-T-H motif DNA-binding region spans 30-49; it reads QQTVAERLCLKVSTIRDIEE. The chain crosses the membrane as a helical; Signal-anchor for type II membrane protein span at residues 112-132; sequence WLMSFTWLIVLVVLGLTGAWW. Topologically, residues 133–345 are periplasmic; that stretch reads WQNHQAQQAE…RVARLTVCVE (213 aa). The segment at 151 to 259 is disordered; sequence SAQLSQNGGQ…PLPTADAGVS (109 aa). Residues 188 to 225 show a composition bias toward polar residues; that stretch reads PLTNHSGSAITNSATTSSVPKTTSTEPVDTANTNTTMH. Low complexity predominate over residues 229-241; the sequence is AASAAVSPSQVPQ.

This sequence belongs to the RodZ family.

The protein resides in the cell inner membrane. In terms of biological role, cytoskeletal protein that is involved in cell-shape control through regulation of the length of the long axis. The sequence is that of Cytoskeleton protein RodZ from Yersinia pestis bv. Antiqua (strain Antiqua).